Here is a 509-residue protein sequence, read N- to C-terminus: 2,3-bisphosphoglycerate-independent phosphoglycerate mutase (509 aa).

Mn(2+) is bound by residues D14 and S64. Residue S64 is the Phosphoserine intermediate of the active site. Substrate is bound by residues H125, 155-156 (RD), R187, R193, 259-262 (RADR), and K332. D399, H403, D440, H441, and H459 together coordinate Mn(2+).

The protein belongs to the BPG-independent phosphoglycerate mutase family. Monomer. Requires Mn(2+) as cofactor.

The enzyme catalyses (2R)-2-phosphoglycerate = (2R)-3-phosphoglycerate. It functions in the pathway carbohydrate degradation; glycolysis; pyruvate from D-glyceraldehyde 3-phosphate: step 3/5. In terms of biological role, catalyzes the interconversion of 2-phosphoglycerate and 3-phosphoglycerate. The polypeptide is 2,3-bisphosphoglycerate-independent phosphoglycerate mutase (Aeromonas salmonicida (strain A449)).